The sequence spans 145 residues: Ribonuclease HI (145 aa).

Residues 1–142 enclose the RNase H type-1 domain; the sequence is MNQTVYLYTD…ADDLANRGAA (142 aa). Mg(2+) is bound by residues Asp10, Glu48, Asp70, and Asp134.

Belongs to the RNase H family. As to quaternary structure, monomer. Requires Mg(2+) as cofactor.

Its subcellular location is the cytoplasm. It carries out the reaction Endonucleolytic cleavage to 5'-phosphomonoester.. Functionally, endonuclease that specifically degrades the RNA of RNA-DNA hybrids. This Neisseria meningitidis serogroup A / serotype 4A (strain DSM 15465 / Z2491) protein is Ribonuclease HI.